Reading from the N-terminus, the 178-residue chain is Adenine phosphoribosyltransferase (178 aa).

This sequence belongs to the purine/pyrimidine phosphoribosyltransferase family. Homodimer.

The protein resides in the cytoplasm. The catalysed reaction is AMP + diphosphate = 5-phospho-alpha-D-ribose 1-diphosphate + adenine. It functions in the pathway purine metabolism; AMP biosynthesis via salvage pathway; AMP from adenine: step 1/1. Catalyzes a salvage reaction resulting in the formation of AMP, that is energically less costly than de novo synthesis. This Helicobacter hepaticus (strain ATCC 51449 / 3B1) protein is Adenine phosphoribosyltransferase.